The chain runs to 190 residues: dTTP/UTP pyrophosphatase (190 aa).

Asp67 functions as the Proton acceptor in the catalytic mechanism.

This sequence belongs to the Maf family. YhdE subfamily. It depends on a divalent metal cation as a cofactor.

Its subcellular location is the cytoplasm. It carries out the reaction dTTP + H2O = dTMP + diphosphate + H(+). The enzyme catalyses UTP + H2O = UMP + diphosphate + H(+). Its function is as follows. Nucleoside triphosphate pyrophosphatase that hydrolyzes dTTP and UTP. May have a dual role in cell division arrest and in preventing the incorporation of modified nucleotides into cellular nucleic acids. The protein is dTTP/UTP pyrophosphatase of Aquifex aeolicus (strain VF5).